Reading from the N-terminus, the 223-residue chain is DNA mismatch repair protein MutH (223 aa).

Belongs to the MutH family.

It is found in the cytoplasm. Functionally, sequence-specific endonuclease that cleaves unmethylated GATC sequences. It is involved in DNA mismatch repair. The sequence is that of DNA mismatch repair protein MutH from Haemophilus influenzae (strain PittEE).